A 489-amino-acid polypeptide reads, in one-letter code: Glycogen synthase (489 aa).

Arginine 20 lines the ADP-alpha-D-glucose pocket.

The protein belongs to the glycosyltransferase 1 family. Bacterial/plant glycogen synthase subfamily.

It catalyses the reaction [(1-&gt;4)-alpha-D-glucosyl](n) + ADP-alpha-D-glucose = [(1-&gt;4)-alpha-D-glucosyl](n+1) + ADP + H(+). Its pathway is glycan biosynthesis; glycogen biosynthesis. Synthesizes alpha-1,4-glucan chains using ADP-glucose. This is Glycogen synthase from Chlorobium phaeobacteroides (strain DSM 266 / SMG 266 / 2430).